The following is a 124-amino-acid chain: p53-regulated apoptosis-inducing protein 1 (124 aa).

Residues 1-16 (MGSSSEASFRSAQASC) show a composition bias toward polar residues. The tract at residues 1-46 (MGSSSEASFRSAQASCSGARRQGLGRGDQNLSVMPPNGRAQTHTPG) is disordered.

Only found to be expressed in thymus.

It localises to the mitochondrion. Its function is as follows. May play an important role in mediating p53/TP53-dependent apoptosis. The chain is p53-regulated apoptosis-inducing protein 1 (TP53AIP1) from Homo sapiens (Human).